The following is a 142-amino-acid chain: Ribosome-binding factor A (142 aa).

A compositionally biased stretch (basic and acidic residues) spans 118–130 (DKAKQKQAGREDD). The segment at 118–142 (DKAKQKQAGREDDTPSVDEQEKDTD) is disordered. Positions 131–142 (TPSVDEQEKDTD) are enriched in acidic residues.

The protein belongs to the RbfA family. In terms of assembly, monomer. Binds 30S ribosomal subunits, but not 50S ribosomal subunits or 70S ribosomes.

It localises to the cytoplasm. Functionally, one of several proteins that assist in the late maturation steps of the functional core of the 30S ribosomal subunit. Associates with free 30S ribosomal subunits (but not with 30S subunits that are part of 70S ribosomes or polysomes). Required for efficient processing of 16S rRNA. May interact with the 5'-terminal helix region of 16S rRNA. The polypeptide is Ribosome-binding factor A (Shewanella denitrificans (strain OS217 / ATCC BAA-1090 / DSM 15013)).